Reading from the N-terminus, the 656-residue chain is uncharacterized protein (656 aa).

Residues 623 to 656 form a disordered region; the sequence is EIDIPGTPASIDPEWSRPPGSITDDHVFDAPLHR. The span at 645-656 shows a compositional bias: basic and acidic residues; the sequence is TDDHVFDAPLHR.

This is an uncharacterized protein from Mycobacterium tuberculosis (strain CDC 1551 / Oshkosh).